The following is a 966-amino-acid chain: Integrator complex subunit 7 (966 aa).

2 positions are modified to phosphoserine: S338 and S809. The tract at residues 941–966 (LQQQAQQPLQPQPLPQPQPRSAYTRF) is disordered.

This sequence belongs to the Integrator subunit 7 family. As to quaternary structure, component of the Integrator complex, composed of core subunits INTS1, INTS2, INTS3, INTS4, INTS5, INTS6, INTS7, INTS8, INTS9/RC74, INTS10, INTS11/CPSF3L, INTS12, INTS13, INTS14 and INTS15. The core complex associates with protein phosphatase 2A subunits PPP2CA and PPP2R1A, to form the Integrator-PP2A (INTAC) complex. Interacts with NABP2.

Its subcellular location is the nucleus. It localises to the chromosome. It is found in the cytoplasm. Component of the integrator complex, a multiprotein complex that terminates RNA polymerase II (Pol II) transcription in the promoter-proximal region of genes. The integrator complex provides a quality checkpoint during transcription elongation by driving premature transcription termination of transcripts that are unfavorably configured for transcriptional elongation: the complex terminates transcription by (1) catalyzing dephosphorylation of the C-terminal domain (CTD) of Pol II subunit POLR2A/RPB1 and SUPT5H/SPT5, (2) degrading the exiting nascent RNA transcript via endonuclease activity and (3) promoting the release of Pol II from bound DNA. The integrator complex is also involved in terminating the synthesis of non-coding Pol II transcripts, such as enhancer RNAs (eRNAs), small nuclear RNAs (snRNAs), telomerase RNAs and long non-coding RNAs (lncRNAs). May be not involved in the recruitment of cytoplasmic dynein to the nuclear envelope by different components of the INT complex. Plays a role in DNA damage response (DDR) signaling during the S phase. The protein is Integrator complex subunit 7 (Ints7) of Mus musculus (Mouse).